Here is a 543-residue protein sequence, read N- to C-terminus: Periplasmic oligopeptide-binding protein OppA (543 aa).

A signal peptide spans 1–26; sequence MTNITKRSLVAAGVLAALMAGNVALA. Cysteine 297 and cysteine 443 form a disulfide bridge.

This sequence belongs to the bacterial solute-binding protein 5 family. The complex is composed of two ATP-binding proteins (OppD and OppF), two transmembrane proteins (OppB and OppC) and a solute-binding protein (OppA).

Its subcellular location is the periplasm. In terms of biological role, part of the ABC transporter complex OppABCDF involved in the uptake of oligopeptides. Plays an important nutritional role. Binds peptides containing from two to five amino acid residues. Displays a preference for tripeptides and tetrapeptides over dipeptides and pentapeptides, for peptides composed of L-amino acids and for positively charged peptides. Cannot bind the cell wall peptide L-Ala-D-Gly-gamma-meso-diaminopimelic acid. This chain is Periplasmic oligopeptide-binding protein OppA, found in Escherichia coli (strain K12).